A 451-amino-acid polypeptide reads, in one-letter code: Bifunctional protein GlmU (451 aa).

The tract at residues Met1–Arg225 is pyrophosphorylase. UDP-N-acetyl-alpha-D-glucosamine-binding positions include Leu7 to Gly10, Lys21, Gln72, Gly77 to Thr78, Tyr99 to Asp101, Gly136, Glu150, Asn165, and Asn223. Asp101 lines the Mg(2+) pocket. Asn223 contacts Mg(2+). A linker region spans residues Leu226–Ala246. Residues Gly247–Lys451 are N-acetyltransferase. UDP-N-acetyl-alpha-D-glucosamine contacts are provided by Arg329 and Lys347. Catalysis depends on His359, which acts as the Proton acceptor. Positions 362 and 373 each coordinate UDP-N-acetyl-alpha-D-glucosamine. Residues Ala376, Asn382–Tyr383, Ser401, Ala419, and Arg436 each bind acetyl-CoA.

In the N-terminal section; belongs to the N-acetylglucosamine-1-phosphate uridyltransferase family. It in the C-terminal section; belongs to the transferase hexapeptide repeat family. As to quaternary structure, homotrimer. Mg(2+) serves as cofactor.

The protein resides in the cytoplasm. The catalysed reaction is alpha-D-glucosamine 1-phosphate + acetyl-CoA = N-acetyl-alpha-D-glucosamine 1-phosphate + CoA + H(+). The enzyme catalyses N-acetyl-alpha-D-glucosamine 1-phosphate + UTP + H(+) = UDP-N-acetyl-alpha-D-glucosamine + diphosphate. Its pathway is nucleotide-sugar biosynthesis; UDP-N-acetyl-alpha-D-glucosamine biosynthesis; N-acetyl-alpha-D-glucosamine 1-phosphate from alpha-D-glucosamine 6-phosphate (route II): step 2/2. It functions in the pathway nucleotide-sugar biosynthesis; UDP-N-acetyl-alpha-D-glucosamine biosynthesis; UDP-N-acetyl-alpha-D-glucosamine from N-acetyl-alpha-D-glucosamine 1-phosphate: step 1/1. The protein operates within bacterial outer membrane biogenesis; LPS lipid A biosynthesis. Catalyzes the last two sequential reactions in the de novo biosynthetic pathway for UDP-N-acetylglucosamine (UDP-GlcNAc). The C-terminal domain catalyzes the transfer of acetyl group from acetyl coenzyme A to glucosamine-1-phosphate (GlcN-1-P) to produce N-acetylglucosamine-1-phosphate (GlcNAc-1-P), which is converted into UDP-GlcNAc by the transfer of uridine 5-monophosphate (from uridine 5-triphosphate), a reaction catalyzed by the N-terminal domain. The protein is Bifunctional protein GlmU of Saccharophagus degradans (strain 2-40 / ATCC 43961 / DSM 17024).